The sequence spans 131 residues: Small ribosomal subunit protein uS8 (131 aa).

It belongs to the universal ribosomal protein uS8 family. Part of the 30S ribosomal subunit. Contacts proteins S5 and S12.

One of the primary rRNA binding proteins, it binds directly to 16S rRNA central domain where it helps coordinate assembly of the platform of the 30S subunit. The chain is Small ribosomal subunit protein uS8 from Nitrosomonas eutropha (strain DSM 101675 / C91 / Nm57).